The chain runs to 532 residues: Probable galacturonosyltransferase 14 (532 aa).

Residues Met1–His40 are Cytoplasmic-facing. A helical; Signal-anchor for type II membrane protein transmembrane segment spans residues Thr41–Leu61. Residues Glu62–Glu532 are Lumenal-facing. 4 N-linked (GlcNAc...) asparagine glycosylation sites follow: Asn305, Asn395, Asn444, and Asn519.

The protein belongs to the glycosyltransferase 8 family. As to expression, expressed in roots, inflorescences, siliques, leaves and stems. Accumulates in pollen grains.

It is found in the golgi apparatus membrane. It participates in glycan metabolism; pectin biosynthesis. May be involved in pectin and/or xylans biosynthesis in cell walls. Together with GAUT13, required for pollen tube growth, possibly through the regulation of pectin biosynthesis and repartition in the pollen tube wall. This chain is Probable galacturonosyltransferase 14, found in Arabidopsis thaliana (Mouse-ear cress).